A 356-amino-acid polypeptide reads, in one-letter code: Protein RecA (356 aa).

69 to 76 serves as a coordination point for ATP; that stretch reads GPESSGKT.

The protein belongs to the RecA family.

It is found in the cytoplasm. In terms of biological role, can catalyze the hydrolysis of ATP in the presence of single-stranded DNA, the ATP-dependent uptake of single-stranded DNA by duplex DNA, and the ATP-dependent hybridization of homologous single-stranded DNAs. It interacts with LexA causing its activation and leading to its autocatalytic cleavage. The polypeptide is Protein RecA (Gloeothece citriformis (strain PCC 7424) (Cyanothece sp. (strain PCC 7424))).